The chain runs to 220 residues: Ribosomal RNA small subunit methyltransferase G (220 aa).

S-adenosyl-L-methionine contacts are provided by glycine 78, leucine 83, and arginine 144.

The protein belongs to the methyltransferase superfamily. RNA methyltransferase RsmG family.

It is found in the cytoplasm. It carries out the reaction guanosine(527) in 16S rRNA + S-adenosyl-L-methionine = N(7)-methylguanosine(527) in 16S rRNA + S-adenosyl-L-homocysteine. Functionally, specifically methylates the N7 position of guanine in position 527 of 16S rRNA. The protein is Ribosomal RNA small subunit methyltransferase G of Alkalilimnicola ehrlichii (strain ATCC BAA-1101 / DSM 17681 / MLHE-1).